A 209-amino-acid polypeptide reads, in one-letter code: GTP-binding nuclear protein Ran1B (209 aa).

The Small GTPase Ran-type domain maps to Asn1 to Asp162. Asp9–Thr16 contributes to the GTP binding site. Residues Lys28–Val36 are switch-I. Residues Gly59, Asn113–Asp116, and Ser141–Lys143 each bind GTP. The tract at residues Gly59–Gln75 is switch-II. The segment covering Gln187–Leu200 has biased composition (low complexity). Positions Gln187 to Asp209 are disordered.

This sequence belongs to the small GTPase superfamily. Ran family. In terms of assembly, found in a nuclear export complex with RanGTP, exportin and pre-miRNA.

It is found in the nucleus. Functionally, GTP-binding protein involved in nucleocytoplasmic transport. Required for the import of protein into the nucleus and also for RNA export. Involved in chromatin condensation and control of cell cycle. This Lotus japonicus (Lotus corniculatus var. japonicus) protein is GTP-binding nuclear protein Ran1B (RAN1B).